The primary structure comprises 1875 residues: Soluble starch synthase 3a, chloroplastic/amyloplastic (1875 aa).

Residues methionine 1–arginine 49 constitute a chloroplast transit peptide. Residues lysine 1007 to histidine 1065 are a coiled coil. Positions alanine 1014–glutamine 1043 are disordered.

Belongs to the glycosyltransferase 1 family. Bacterial/plant glycogen synthase subfamily. Expressed in the endosperm.

It is found in the plastid. The protein resides in the chloroplast. It localises to the amyloplast. It carries out the reaction [(1-&gt;4)-alpha-D-glucosyl](n) + ADP-alpha-D-glucose = [(1-&gt;4)-alpha-D-glucosyl](n+1) + ADP + H(+). It participates in glycan biosynthesis; starch biosynthesis. Its function is as follows. Involved in starch synthesis in endosperm amyloplasts. Plays an important role in the elongation of amylopectin B chains. The polypeptide is Soluble starch synthase 3a, chloroplastic/amyloplastic (Oryza sativa subsp. japonica (Rice)).